The sequence spans 140 residues: Large ribosomal subunit protein uL11 (140 aa).

The protein belongs to the universal ribosomal protein uL11 family. Part of the ribosomal stalk of the 50S ribosomal subunit. Interacts with L10 and the large rRNA to form the base of the stalk. L10 forms an elongated spine to which L12 dimers bind in a sequential fashion forming a multimeric L10(L12)X complex. One or more lysine residues are methylated.

In terms of biological role, forms part of the ribosomal stalk which helps the ribosome interact with GTP-bound translation factors. The chain is Large ribosomal subunit protein uL11 from Desulfovibrio desulfuricans (strain ATCC 27774 / DSM 6949 / MB).